A 367-amino-acid polypeptide reads, in one-letter code: Hyaluronidase (367 aa).

2 disulfide bridges follow: C48/C337 and C214/C226. N-linked (GlcNAc...) asparagine glycosylation occurs at N108. Residue E138 is the Proton donor of the active site. A glycan (N-linked (GlcNAc...) asparagine) is linked at N354.

The protein belongs to the glycosyl hydrolase 56 family.

It catalyses the reaction Random hydrolysis of (1-&gt;4)-linkages between N-acetyl-beta-D-glucosamine and D-glucuronate residues in hyaluronate.. Its function is as follows. May play a role in reproduction. This Polistes annularis (Paper wasp) protein is Hyaluronidase.